The sequence spans 143 residues: Nucleoside diphosphate kinase (143 aa).

6 residues coordinate ATP: Lys11, Phe59, Arg87, Thr93, Arg104, and Asn114. His117 functions as the Pros-phosphohistidine intermediate in the catalytic mechanism.

The protein belongs to the NDK family. As to quaternary structure, homotetramer. Mg(2+) serves as cofactor.

The protein resides in the cytoplasm. The enzyme catalyses a 2'-deoxyribonucleoside 5'-diphosphate + ATP = a 2'-deoxyribonucleoside 5'-triphosphate + ADP. It catalyses the reaction a ribonucleoside 5'-diphosphate + ATP = a ribonucleoside 5'-triphosphate + ADP. In terms of biological role, major role in the synthesis of nucleoside triphosphates other than ATP. The ATP gamma phosphate is transferred to the NDP beta phosphate via a ping-pong mechanism, using a phosphorylated active-site intermediate. The protein is Nucleoside diphosphate kinase of Stutzerimonas stutzeri (strain A1501) (Pseudomonas stutzeri).